An 89-amino-acid chain; its full sequence is UPF0145 protein MJ1170 (89 aa).

The protein belongs to the UPF0145 family. Highly divergent.

This is UPF0145 protein MJ1170 from Methanocaldococcus jannaschii (strain ATCC 43067 / DSM 2661 / JAL-1 / JCM 10045 / NBRC 100440) (Methanococcus jannaschii).